Reading from the N-terminus, the 201-residue chain is Large ribosomal subunit protein uL4 (201 aa).

The tract at residues 46 to 71 (QKTRAEITGSGKKPWRQKGTGRARSG) is disordered.

The protein belongs to the universal ribosomal protein uL4 family. In terms of assembly, part of the 50S ribosomal subunit.

Its function is as follows. One of the primary rRNA binding proteins, this protein initially binds near the 5'-end of the 23S rRNA. It is important during the early stages of 50S assembly. It makes multiple contacts with different domains of the 23S rRNA in the assembled 50S subunit and ribosome. In terms of biological role, forms part of the polypeptide exit tunnel. In Klebsiella pneumoniae (strain 342), this protein is Large ribosomal subunit protein uL4.